A 349-amino-acid polypeptide reads, in one-letter code: Protein RecA (349 aa).

Position 65 to 72 (Gly65 to Thr72) interacts with ATP. The tract at residues Phe329–Glu349 is disordered. Over residues Gly331–Asp340 the composition is skewed to acidic residues.

Belongs to the RecA family.

The protein localises to the cytoplasm. Functionally, can catalyze the hydrolysis of ATP in the presence of single-stranded DNA, the ATP-dependent uptake of single-stranded DNA by duplex DNA, and the ATP-dependent hybridization of homologous single-stranded DNAs. It interacts with LexA causing its activation and leading to its autocatalytic cleavage. In Staphylococcus epidermidis (strain ATCC 35984 / DSM 28319 / BCRC 17069 / CCUG 31568 / BM 3577 / RP62A), this protein is Protein RecA.